The following is a 216-amino-acid chain: Adenylate kinase (216 aa).

Position 10 to 15 (10 to 15 (GAGKGT)) interacts with ATP. The NMP stretch occupies residues 30–59 (STGDIFRKNIKEGTELGKKAKEYMDQGLLV). Residues Thr-31, Arg-36, 57 to 59 (LLV), 85 to 88 (GFPR), and Gln-92 each bind AMP. The segment at 126–163 (GRRICKSCGATYHVEFNPPKVEGVCDVCQGELYQRADD) is LID. Arg-127 provides a ligand contact to ATP. Zn(2+)-binding residues include Cys-130 and Cys-133. 136–137 (TY) contributes to the ATP binding site. Zn(2+)-binding residues include Cys-150 and Cys-153. AMP contacts are provided by Arg-160 and Arg-171. Residue Gln-199 coordinates ATP.

This sequence belongs to the adenylate kinase family. Monomer.

Its subcellular location is the cytoplasm. It catalyses the reaction AMP + ATP = 2 ADP. It functions in the pathway purine metabolism; AMP biosynthesis via salvage pathway; AMP from ADP: step 1/1. Its function is as follows. Catalyzes the reversible transfer of the terminal phosphate group between ATP and AMP. Plays an important role in cellular energy homeostasis and in adenine nucleotide metabolism. This is Adenylate kinase from Clostridioides difficile (strain 630) (Peptoclostridium difficile).